Consider the following 385-residue polypeptide: Probable alpha-galactosidase (385 aa).

An N-terminal signal peptide occupies residues 1–19 (MMKIAATLLATIALATVNA). 2 cysteine pairs are disulfide-bonded: cysteine 40–cysteine 72 and cysteine 119–cysteine 149. Aspartate 147 serves as the catalytic Nucleophile. 180 to 184 (DWGYE) lines the substrate pocket. Residue aspartate 202 is the Proton donor of the active site.

Belongs to the glycosyl hydrolase 27 family.

The enzyme catalyses Hydrolysis of terminal, non-reducing alpha-D-galactose residues in alpha-D-galactosides, including galactose oligosaccharides, galactomannans and galactolipids.. The protein is Probable alpha-galactosidase (melA) of Dictyostelium discoideum (Social amoeba).